A 453-amino-acid chain; its full sequence is Bifunctional protein GlmU (453 aa).

The interval 1 to 231 (MERTCLAVIL…EIEMTGCNNR (231 aa)) is pyrophosphorylase. UDP-N-acetyl-alpha-D-glucosamine is bound by residues 10 to 13 (LAAG), K24, Q77, 82 to 83 (GT), 105 to 107 (YGD), G143, E157, N172, and N229. D107 provides a ligand contact to Mg(2+). A Mg(2+)-binding site is contributed by N229. The interval 232 to 252 (AELAVIERFWQERRRREMMLA) is linker. The tract at residues 253–453 (GVTMIAPETV…AIKAAKKAEA (201 aa)) is N-acetyltransferase. UDP-N-acetyl-alpha-D-glucosamine contacts are provided by R318 and K336. H348 (proton acceptor) is an active-site residue. 2 residues coordinate UDP-N-acetyl-alpha-D-glucosamine: Y351 and N362. Acetyl-CoA is bound by residues A365, 371-372 (NY), S390, S408, and R425.

In the N-terminal section; belongs to the N-acetylglucosamine-1-phosphate uridyltransferase family. The protein in the C-terminal section; belongs to the transferase hexapeptide repeat family. As to quaternary structure, homotrimer. Mg(2+) is required as a cofactor.

The protein resides in the cytoplasm. The catalysed reaction is alpha-D-glucosamine 1-phosphate + acetyl-CoA = N-acetyl-alpha-D-glucosamine 1-phosphate + CoA + H(+). It carries out the reaction N-acetyl-alpha-D-glucosamine 1-phosphate + UTP + H(+) = UDP-N-acetyl-alpha-D-glucosamine + diphosphate. It participates in nucleotide-sugar biosynthesis; UDP-N-acetyl-alpha-D-glucosamine biosynthesis; N-acetyl-alpha-D-glucosamine 1-phosphate from alpha-D-glucosamine 6-phosphate (route II): step 2/2. It functions in the pathway nucleotide-sugar biosynthesis; UDP-N-acetyl-alpha-D-glucosamine biosynthesis; UDP-N-acetyl-alpha-D-glucosamine from N-acetyl-alpha-D-glucosamine 1-phosphate: step 1/1. Its pathway is bacterial outer membrane biogenesis; LPS lipid A biosynthesis. Its function is as follows. Catalyzes the last two sequential reactions in the de novo biosynthetic pathway for UDP-N-acetylglucosamine (UDP-GlcNAc). The C-terminal domain catalyzes the transfer of acetyl group from acetyl coenzyme A to glucosamine-1-phosphate (GlcN-1-P) to produce N-acetylglucosamine-1-phosphate (GlcNAc-1-P), which is converted into UDP-GlcNAc by the transfer of uridine 5-monophosphate (from uridine 5-triphosphate), a reaction catalyzed by the N-terminal domain. This chain is Bifunctional protein GlmU, found in Rhizobium etli (strain ATCC 51251 / DSM 11541 / JCM 21823 / NBRC 15573 / CFN 42).